A 435-amino-acid chain; its full sequence is Membrane-bound ghrelin O-acyltransferase MBOAT4 (435 aa).

The Lumenal portion of the chain corresponds to 1–5 (MDWLQ). The helical transmembrane segment at 6–26 (LFFLHPLSFYQGAAFPFALLF) threads the bilayer. Topologically, residues 27–40 (NYLCILDTFSTRAR) are cytoplasmic. The chain crosses the membrane as a helical span at residues 41-56 (YLFLLAGGGVLAFAAM). Over 57-59 (GPY) the chain is Lumenal. Residues 60-76 (SLLIFIPALCAVALVSF) traverse the membrane as a helical segment. Over 77 to 82 (LSPQEV) the chain is Cytoplasmic. The helical transmembrane segment at 83-101 (HRLTFFFQMGWQTLCHLGL) threads the bilayer. Topologically, residues 102 to 120 (HYTEYYLGEPPPVRFYITL) are lumenal. Residues 121–136 (SSLMLLTQRVTSLSLD) traverse the membrane as a helical segment. At 137-206 (ICEGKVEAPR…YPSISFRALT (70 aa)) the chain is on the cytoplasmic side. A helical transmembrane segment spans residues 207–227 (WRGLQILGLECLKVALRSAVS). At 228-240 (AGAGLDDCQRLEC) the chain is on the lumenal side. Residues 241-261 (IYLMWSTAWLFKLTYYSHWIL) traverse the membrane as a helical segment. The Cytoplasmic segment spans residues 262-324 (DDSLLHAAGF…RRLVFRKSRR (63 aa)). Catalysis depends on residues asparagine 307 and histidine 338. Residues 325–338 (WPLLQTFAFSAWWH) form a helical membrane-spanning segment. Residues 339-340 (GL) are Lumenal-facing. Residues 341-357 (HPGQVFGFLCWSVMVKA) traverse the membrane as a helical segment. Topologically, residues 358–376 (DYLIHTFANVCIRSWPLRL) are cytoplasmic. A helical transmembrane segment spans residues 377–397 (LYRALTWAHTQLIIAYIMLAV). Over 398–407 (EGRSLSSLCQ) the chain is Lumenal. Residues 408 to 428 (LCCSYNSLFPVMYGLLLFLLA) traverse the membrane as a helical segment. Residues 429-435 (ERKDKRN) are Cytoplasmic-facing.

This sequence belongs to the membrane-bound acyltransferase family. Monomer. Not glycosylated. Highly expressed in stomach and pancreas. Lower expression in small intestine and colon. Very low expression in testis.

The protein resides in the endoplasmic reticulum membrane. The catalysed reaction is octanoyl-CoA + L-seryl-[protein] = O-octanoyl-L-seryl-[protein] + CoA. It catalyses the reaction hexanoyl-CoA + L-seryl-[protein] = O-hexanoyl-L-seryl-[protein] + CoA. It carries out the reaction decanoyl-CoA + L-seryl-[protein] = O-decanoyl-L-seryl-[protein] + CoA. The enzyme catalyses L-seryl-[protein] + acetyl-CoA = O-acetyl-L-seryl-[protein] + CoA. The catalysed reaction is L-seryl-[protein] + butanoyl-CoA = O-butanoyl-L-seryl-[protein] + CoA. It catalyses the reaction pentanoyl-CoA + L-seryl-[protein] = O-pentanoyl-L-seryl-[protein] + CoA. It carries out the reaction heptanoyl-CoA + L-seryl-[protein] = O-heptanoyl-L-seryl-[protein] + CoA. The enzyme catalyses nonanoyl-CoA + L-seryl-[protein] = O-nonanoyl-L-seryl-[protein] + CoA. The catalysed reaction is L-seryl-[protein] + dodecanoyl-CoA = O-dodecanoyl-L-seryl-[protein] + CoA. It catalyses the reaction L-seryl-[protein] + tetradecanoyl-CoA = O-tetradecanoyl-L-seryl-[protein] + CoA. It carries out the reaction a fatty acyl-CoA + L-seryl-[protein] = O-fatty acyl-L-seryl-[protein] + CoA. Inhibited by 1-[2-cyano-3,12-dioxooleana-1,9(11)- dien-28-oyl]ethylamide (CDDO-EA) with an IC(50) of 60 uM. Inhibited by Fe3+ and Cu2+ and the O-acyltransferase activity is completely blocked over 5 mM Fe3+ and 0.5 mM Cu2+. In terms of biological role, catalyzes ghrelin acylation at 'Ser-3' using preferentially octanoyl-CoA, hexanoyl-CoA and decanoyl-CoA as acyl-CoA donors leading to ghrelin activity. In vitro also uses acyl-CoA donors of different lengths from short-chain (C2) to long-chain fatty acids (C16) knowing that acyl-CoA donors from butanoyl-CoA (C4) to dodecanoyl-CoA (C12) are more efficient compared to longer acyl-CoA donors, such as myristoyl-CoA (C14) and palmitoyl-CoA (C16) that are not efficient. Functionally, inactive octanoyltransferase activity. This chain is Membrane-bound ghrelin O-acyltransferase MBOAT4, found in Mus musculus (Mouse).